The sequence spans 98 residues: Large ribosomal subunit protein uL23 (98 aa).

The protein belongs to the universal ribosomal protein uL23 family. As to quaternary structure, part of the 50S ribosomal subunit. Contacts protein L29, and trigger factor when it is bound to the ribosome.

Its function is as follows. One of the early assembly proteins it binds 23S rRNA. One of the proteins that surrounds the polypeptide exit tunnel on the outside of the ribosome. Forms the main docking site for trigger factor binding to the ribosome. This is Large ribosomal subunit protein uL23 from Acidothermus cellulolyticus (strain ATCC 43068 / DSM 8971 / 11B).